The following is a 58-amino-acid chain: Proteinase inhibitor PSKP-1 (58 aa).

The Kazal-like domain maps to 1–58 (VIEPKCYKYEGKKCPPDINPVCGTDKRTYYNECALCVFIRQSTKKADKAIKIKKWGKC). Intrachain disulfides connect cysteine 6/cysteine 36, cysteine 14/cysteine 33, and cysteine 22/cysteine 58.

As to quaternary structure, monomer. Skin.

It localises to the secreted. Has antibacterial activity against Gram-negative bacterium E.coli ATCC 11229. Shows hemagglutinating activity. Inhibits prolyl endopeptidase, but not trypsin, chymotrypsin, V8 protease and proteinase K. May have a role in mucosal defense against microbes by interacting directly with their membranes. In Phyllomedusa sauvagei (Sauvage's leaf frog), this protein is Proteinase inhibitor PSKP-1.